A 294-amino-acid chain; its full sequence is Elongation factor Ts (294 aa).

The interval 80–83 is involved in Mg(2+) ion dislocation from EF-Tu; that stretch reads TDFV.

Belongs to the EF-Ts family.

The protein resides in the cytoplasm. Functionally, associates with the EF-Tu.GDP complex and induces the exchange of GDP to GTP. It remains bound to the aminoacyl-tRNA.EF-Tu.GTP complex up to the GTP hydrolysis stage on the ribosome. This is Elongation factor Ts from Polynucleobacter necessarius subsp. necessarius (strain STIR1).